The following is a 308-amino-acid chain: Ribonuclease HIII (308 aa).

The RNase H type-2 domain maps to 88–304 (FHCIGSDEAG…RDKAIHLINQ (217 aa)). The a divalent metal cation site is built by D94, E95, and D199.

It belongs to the RNase HII family. RnhC subfamily. Mn(2+) is required as a cofactor. Requires Mg(2+) as cofactor.

Its subcellular location is the cytoplasm. The enzyme catalyses Endonucleolytic cleavage to 5'-phosphomonoester.. Functionally, endonuclease that specifically degrades the RNA of RNA-DNA hybrids. The protein is Ribonuclease HIII of Staphylococcus epidermidis (strain ATCC 35984 / DSM 28319 / BCRC 17069 / CCUG 31568 / BM 3577 / RP62A).